The chain runs to 131 residues: Squamosa promoter-binding-like protein 3 (131 aa).

Positions 1 to 17 are enriched in basic and acidic residues; it reads MSMRRSKAEGKRSLREL. The tract at residues 1–54 is disordered; it reads MSMRRSKAEGKRSLRELSEEEEEEEETEDEDTFEEEEALEKKQKGKATSSSGVC. Residues 18-38 are compositionally biased toward acidic residues; the sequence is SEEEEEEEETEDEDTFEEEEA. The sufficient and necessary for DNA binding stretch occupies residues 45–129; that stretch reads GKATSSSGVC…GHNERRRKST (85 aa). The SBP-type zinc finger occupies 51–128; the sequence is SGVCQVESCT…AGHNERRRKS (78 aa). Residues cysteine 54, cysteine 59, cysteine 76, histidine 79, cysteine 95, cysteine 98, histidine 102, and cysteine 114 each coordinate Zn(2+). The short motif at 111–127 is the Bipartite nuclear localization signal element; sequence KRSCRRRLAGHNERRRK.

Zn(2+) is required as a cofactor. As to expression, expressed in vegetative and inflorescence apical meristems, floral meristems, leaf and flower organ primordia, inflorescence stem tissue and to lower extent in roots.

The protein localises to the nucleus. Its subcellular location is the cytoplasm. Trans-acting factor that binds specifically to the consensus nucleotide sequence 5'-TNCGTACAA-3' of AP1 promoter. Binds specifically to the 5'-GTAC-3' core sequence. Promotes both vegetative phase change and flowering. Regulates phase-specific patterns of leaf epidermal differentiation and flowering time, but does not seem to affect leaf shape. The polypeptide is Squamosa promoter-binding-like protein 3 (SPL3) (Arabidopsis thaliana (Mouse-ear cress)).